A 405-amino-acid chain; its full sequence is Cystathionine gamma-lyase (405 aa).

Arg62, Tyr114, and Arg119 together coordinate substrate. Position 212 is an N6-(pyridoxal phosphate)lysine (Lys212). Glu339 is a binding site for substrate.

This sequence belongs to the trans-sulfuration enzymes family. As to quaternary structure, homotetramer. Interacts with CALM in a calcium-dependent manner. The cofactor is pyridoxal 5'-phosphate.

The protein localises to the cytoplasm. The catalysed reaction is L,L-cystathionine + H2O = 2-oxobutanoate + L-cysteine + NH4(+). The enzyme catalyses L-cysteine + H2O = hydrogen sulfide + pyruvate + NH4(+) + H(+). It carries out the reaction L-homocysteine + H2O = 2-oxobutanoate + hydrogen sulfide + NH4(+) + H(+). It catalyses the reaction L-homoserine = 2-oxobutanoate + NH4(+). The catalysed reaction is L-selenocystathionine + H2O = L-selenocysteine + 2-oxobutanoate + NH4(+). It participates in amino-acid biosynthesis; L-cysteine biosynthesis; L-cysteine from L-homocysteine and L-serine: step 2/2. Functionally, catalyzes the last step in the trans-sulfuration pathway from L-methionine to L-cysteine in a pyridoxal-5'-phosphate (PLP)-dependent manner, which consists on cleaving the L,L-cystathionine molecule into L-cysteine, ammonia and 2-oxobutanoate. Part of the L-cysteine derived from the trans-sulfuration pathway is utilized for biosynthesis of the ubiquitous antioxidant glutathione. Besides its role in the conversion of L-cystathionine into L-cysteine, it utilizes L-cysteine and L-homocysteine as substrates (at much lower rates than L,L-cystathionine) to produce hydrogen sulfide (H2S). In vitro, it converts two L-cysteine molecules into lanthionine and H2S, and two L-homocysteine molecules to homolanthionine and H2S, which can be particularly relevant under conditions of severe hyperhomocysteinemia. Lanthionine and homolanthionine are structural homologs of L,L-cystathionine that differ by the absence or presence of an extra methylene group, respectively. Acts as a cysteine-protein sulfhydrase by mediating sulfhydration of target proteins: sulfhydration consists of converting -SH groups into -SSH on specific cysteine residues of target proteins such as GAPDH, PTPN1 and NF-kappa-B subunit RELA, thereby regulating their function. By generating the gasotransmitter H2S, it participates in a number of physiological processes such as vasodilation, bone protection, and inflammation. Plays an essential role in myogenesis by contributing to the biogenesis of H2S in skeletal muscle tissue. Can also accept homoserine as substrate. Catalyzes the elimination of selenocystathionine (which can be derived from the diet) to yield selenocysteine, ammonia and 2-oxobutanoate. This is Cystathionine gamma-lyase (CTH) from Macaca fascicularis (Crab-eating macaque).